Here is a 523-residue protein sequence, read N- to C-terminus: Cytidine and dCMP deaminase domain-containing protein 1 (523 aa).

A compositionally biased stretch (polar residues) spans 1–11 (MKETDQMQSLE). Disordered regions lie at residues 1 to 27 (MKET…GSMT) and 55 to 81 (QGQK…RVST). A CMP/dCMP-type deaminase 1 domain is found at 71-169 (GDNEELTRVS…SLLTEASSSE (99 aa)). Zn(2+)-binding residues include His-110, Cys-135, and Cys-138. The Nuclear export signal motif lies at 272–284 (NLRQNMKDLILLL). The 166-residue stretch at 318-483 (EVARHCMVQA…LNPSEAYSLD (166 aa)) folds into the CMP/dCMP-type deaminase 2 domain. Residue His-399 coordinates Zn(2+). Catalysis depends on Glu-401, which acts as the Proton donor. The Zn(2+) site is built by Cys-427 and Cys-430. The interval 478-523 (EAYSLDPNEPERRENGVLRRRSAKDEQRSSKRPRLETRSAGRATLQ) is disordered. The segment covering 486–516 (EPERRENGVLRRRSAKDEQRSSKRPRLETRS) has biased composition (basic and acidic residues). Residues 489–511 (RRENGVLRRRSAKDEQRSSKRPR) carry the Bipartite nuclear localization signal motif.

The protein belongs to the cytidine and deoxycytidylate deaminase family. It depends on Zn(2+) as a cofactor.

The protein resides in the cytoplasm. It is found in the nucleus. It catalyses the reaction 2'-deoxycytidine + H2O + H(+) = 2'-deoxyuridine + NH4(+). It carries out the reaction cytidine + H2O + H(+) = uridine + NH4(+). Its function is as follows. Catalyzes the deamination of cytidine and deoxycytidine into uridine and deoxyuridine, respectively. May play an important role in testicular development and spermatogenesis. This chain is Cytidine and dCMP deaminase domain-containing protein 1 (Cdadc1), found in Mus musculus (Mouse).